A 163-amino-acid chain; its full sequence is Nucleotide-binding protein PC1_1036 (163 aa).

This sequence belongs to the YajQ family.

In terms of biological role, nucleotide-binding protein. In Pectobacterium carotovorum subsp. carotovorum (strain PC1), this protein is Nucleotide-binding protein PC1_1036.